A 128-amino-acid chain; its full sequence is uncharacterized protein (128 aa).

Residues 1-50 form a disordered region; the sequence is MSNEQGKGMGFFGNKGKPASEKKDEKKTKLDLDYKPDLNPSTPYDPTLPV. A compositionally biased stretch (basic and acidic residues) spans 18-36; sequence PASEKKDEKKTKLDLDYKP.

This is an uncharacterized protein from Bacillus anthracis.